The sequence spans 62 residues: Large ribosomal subunit protein uL30 (62 aa).

It belongs to the universal ribosomal protein uL30 family. Part of the 50S ribosomal subunit.

The polypeptide is Large ribosomal subunit protein uL30 (Gluconobacter oxydans (strain 621H) (Gluconobacter suboxydans)).